The primary structure comprises 330 residues: Ribosomal RNA small subunit methyltransferase H (330 aa).

S-adenosyl-L-methionine is bound by residues 40 to 42 (GGY), aspartate 58, phenylalanine 85, aspartate 101, and glutamine 108.

The protein belongs to the methyltransferase superfamily. RsmH family.

It localises to the cytoplasm. It carries out the reaction cytidine(1402) in 16S rRNA + S-adenosyl-L-methionine = N(4)-methylcytidine(1402) in 16S rRNA + S-adenosyl-L-homocysteine + H(+). In terms of biological role, specifically methylates the N4 position of cytidine in position 1402 (C1402) of 16S rRNA. In Roseobacter denitrificans (strain ATCC 33942 / OCh 114) (Erythrobacter sp. (strain OCh 114)), this protein is Ribosomal RNA small subunit methyltransferase H.